The sequence spans 530 residues: Probable 1,4-beta-D-glucan cellobiohydrolase B (530 aa).

The N-terminal stretch at 1-26 (MLASTFSYRMYKTALILAALLGSGQA) is a signal peptide. Residues 27-461 (QQVGTSQAEV…SNIKVGPIGS (435 aa)) are catalytic. Glutamate 238 (nucleophile) is an active-site residue. The Proton donor role is filled by glutamate 243. The N-linked (GlcNAc...) asparagine glycan is linked to asparagine 296. Residues 462–492 (TFNSGGSNPGGGTTTTAKPTTTTTTAGSPGG) form a disordered region. Positions 462–494 (TFNSGGSNPGGGTTTTAKPTTTTTTAGSPGGTG) are ser/Thr-rich linker. The segment covering 475–488 (TTTAKPTTTTTTAG) has biased composition (low complexity). One can recognise a CBM1 domain in the interval 494 to 530 (GVAQHYGQCGGNGWQGPTTCASPYTCQKLNDFYSQCL). Disulfide bonds link cysteine 502–cysteine 519 and cysteine 513–cysteine 529.

It belongs to the glycosyl hydrolase 7 (cellulase C) family.

The protein resides in the secreted. It carries out the reaction Hydrolysis of (1-&gt;4)-beta-D-glucosidic linkages in cellulose and cellotetraose, releasing cellobiose from the non-reducing ends of the chains.. The biological conversion of cellulose to glucose generally requires three types of hydrolytic enzymes: (1) Endoglucanases which cut internal beta-1,4-glucosidic bonds; (2) Exocellobiohydrolases that cut the disaccharide cellobiose from the non-reducing end of the cellulose polymer chain; (3) Beta-1,4-glucosidases which hydrolyze the cellobiose and other short cello-oligosaccharides to glucose. The protein is Probable 1,4-beta-D-glucan cellobiohydrolase B (cbhB) of Neosartorya fischeri (strain ATCC 1020 / DSM 3700 / CBS 544.65 / FGSC A1164 / JCM 1740 / NRRL 181 / WB 181) (Aspergillus fischerianus).